A 329-amino-acid chain; its full sequence is Sorting assembly machinery 35 kDa subunit (329 aa).

Component of the mitochondrial outer membrane sorting assembly machinery (SAM or TOB) complex, which at least consists of SAM35, SAM37 and SAM50.

It localises to the mitochondrion outer membrane. Functionally, essential component of the mitochondrial outer membrane sorting assembly machinery (SAM or TOB) complex, which is required for the sorting of proteins with complicated topology, such as beta-barrel proteins, to the mitochondrial outer membrane after import by the TOM complex. The polypeptide is Sorting assembly machinery 35 kDa subunit (SAM35) (Saccharomyces cerevisiae (strain ATCC 204508 / S288c) (Baker's yeast)).